A 301-amino-acid chain; its full sequence is Phosphatidylserine decarboxylase proenzyme (301 aa).

Catalysis depends on charge relay system; for autoendoproteolytic cleavage activity residues Asp-117, His-173, and Ser-260. The Schiff-base intermediate with substrate; via pyruvic acid; for decarboxylase activity role is filled by Ser-260. A Pyruvic acid (Ser); by autocatalysis modification is found at Ser-260.

This sequence belongs to the phosphatidylserine decarboxylase family. PSD-B subfamily. Prokaryotic type II sub-subfamily. In terms of assembly, heterodimer of a large membrane-associated beta subunit and a small pyruvoyl-containing alpha subunit. Pyruvate is required as a cofactor. Is synthesized initially as an inactive proenzyme. Formation of the active enzyme involves a self-maturation process in which the active site pyruvoyl group is generated from an internal serine residue via an autocatalytic post-translational modification. Two non-identical subunits are generated from the proenzyme in this reaction, and the pyruvate is formed at the N-terminus of the alpha chain, which is derived from the carboxyl end of the proenzyme. The autoendoproteolytic cleavage occurs by a canonical serine protease mechanism, in which the side chain hydroxyl group of the serine supplies its oxygen atom to form the C-terminus of the beta chain, while the remainder of the serine residue undergoes an oxidative deamination to produce ammonia and the pyruvoyl prosthetic group on the alpha chain. During this reaction, the Ser that is part of the protease active site of the proenzyme becomes the pyruvoyl prosthetic group, which constitutes an essential element of the active site of the mature decarboxylase.

It is found in the cell membrane. The enzyme catalyses a 1,2-diacyl-sn-glycero-3-phospho-L-serine + H(+) = a 1,2-diacyl-sn-glycero-3-phosphoethanolamine + CO2. It participates in phospholipid metabolism; phosphatidylethanolamine biosynthesis; phosphatidylethanolamine from CDP-diacylglycerol: step 2/2. Its function is as follows. Catalyzes the formation of phosphatidylethanolamine (PtdEtn) from phosphatidylserine (PtdSer). The polypeptide is Phosphatidylserine decarboxylase proenzyme (Chlamydia muridarum (strain MoPn / Nigg)).